The chain runs to 281 residues: Probable endonuclease 4 (281 aa).

9 residues coordinate Zn(2+): H69, H109, E145, D179, H182, H216, D229, H231, and E261.

This sequence belongs to the AP endonuclease 2 family. It depends on Zn(2+) as a cofactor.

It catalyses the reaction Endonucleolytic cleavage to 5'-phosphooligonucleotide end-products.. In terms of biological role, endonuclease IV plays a role in DNA repair. It cleaves phosphodiester bonds at apurinic or apyrimidinic (AP) sites, generating a 3'-hydroxyl group and a 5'-terminal sugar phosphate. In Pectobacterium atrosepticum (strain SCRI 1043 / ATCC BAA-672) (Erwinia carotovora subsp. atroseptica), this protein is Probable endonuclease 4.